The primary structure comprises 1079 residues: Integrator complex subunit 3 homolog (1079 aa).

3 disordered regions span residues 539–574 (ESSE…DDLP), 925–949 (YPSS…TPSA), and 1010–1079 (AVGR…NDSD). Residues 938–949 (KGSSAASSTPSA) show a composition bias toward low complexity. Residues serine 1049, serine 1050, serine 1054, and serine 1055 each carry the phosphoserine modification. The segment covering 1062–1073 (HKITQAAKKRKK) has biased composition (basic residues).

The protein belongs to the Integrator subunit 3 family. Belongs to the multiprotein complex Integrator, at least composed of IntS1, IntS2, IntS3, IntS4, omd/IntS5, IntS6, defl/IntS7, IntS8, IntS9, IntS10, IntS11, IntS12, asun/IntS13, IntS14 and IntS15. The core complex associates with protein phosphatase 2A subunits mts/PP2A and Pp2A-29B, to form the Integrator-PP2A (INTAC) complex.

It localises to the nucleus. The protein localises to the cytoplasm. Its function is as follows. Component of the integrator complex, a multiprotein complex that terminates RNA polymerase II (Pol II) transcription in the promoter-proximal region of genes. The integrator complex provides a quality checkpoint during transcription elongation by driving premature transcription termination of transcripts that are unfavorably configured for transcriptional elongation: the complex terminates transcription by (1) catalyzing dephosphorylation of the C-terminal domain (CTD) of Pol II subunit Polr2A/Rbp1 and Spt5, and (2) degrading the exiting nascent RNA transcript via endonuclease activity. The integrator complex is also involved in the 3'-end processing of the U7 snRNA, and also the spliceosomal snRNAs U1, U2, U4 and U5. The sequence is that of Integrator complex subunit 3 homolog (IntS3) from Drosophila virilis (Fruit fly).